Consider the following 469-residue polypeptide: 23S rRNA (uracil(1939)-C(5))-methyltransferase RlmD (469 aa).

Residues 11–69 enclose the TRAM domain; that stretch reads PKTSNQRLTVTVDKLDMNGVGVARWQNKPIFIAGVLPDEIVDVKVIEQKSKYARAKLIS. Residues Cys82, Cys88, Cys91, and Cys178 each coordinate [4Fe-4S] cluster. S-adenosyl-L-methionine contacts are provided by Gln300, Phe329, Asn334, Glu350, Asp377, and Asp399. The Nucleophile role is filled by Cys425.

Belongs to the class I-like SAM-binding methyltransferase superfamily. RNA M5U methyltransferase family. RlmD subfamily.

It carries out the reaction uridine(1939) in 23S rRNA + S-adenosyl-L-methionine = 5-methyluridine(1939) in 23S rRNA + S-adenosyl-L-homocysteine + H(+). Functionally, catalyzes the formation of 5-methyl-uridine at position 1939 (m5U1939) in 23S rRNA. This is 23S rRNA (uracil(1939)-C(5))-methyltransferase RlmD from Colwellia psychrerythraea (strain 34H / ATCC BAA-681) (Vibrio psychroerythus).